The chain runs to 985 residues: MSRIESLTRARIDRSKEQATKTREKEKMKEAKDARYTNGHLFTTISVSGMTMCYACNKSITAKEALICPTCNVTIHNRCKDTLANCTKVKQKQQKAALLRNNTALQSVSLRSKTTTRERPTSAIYPSDSFRQSLLGSRRGLSSLSLAKSVSTTNIAGHFNDESPLGLRQILSQSTDSLNMRNRTLSVESLIDEGVEVFYNELMSDFEMDEKDFEADSWSLAVDSSFLQQHKKEVMKKQDVIYELIQTELHHVRTLKIMTRLFRTGMLEELQMEPEVVQGLFPCVDELSDIHTRFLSQLLERRRQALCPGSTRNFVIHRLGDLLISQFSGSNAEQMRKTYSEFCSRHTKALKLYKELYARDKRFQQFIRKMTRSAVLKRHGVQECILLVTQRITKYPVLINRILQNSHGIEEEYQDLAAALGLVKELLSNVDQDVHELEKEARLQEIYNRMDPRAQTPVPGKGPFGRDELLRRKLIHDGCLLWKTATGRFKDVLLLLMTDVLVFLQEKDQKYIFTSLDKPSVVSLQNLIVRDIANQAKGMFLISSGPPEMYEVHAASRDDRTTWIRVIQQSVRLCPSREDFPLIETEDKAYLRRIKTKLQQKNQALVELLQMNVELFAEMVHFQALKAGFIGMPPPTLPRGLFRLESFESLRGERLLKDALREVEGLKDLLLGPCVDLPLTAREPALPVEADSGSCPGVTANGEARTFNGSIELCRADSDSSQKDRNGNQLRSPQEEALQPLVNLYGLLQGLQAVVVQQERLMEALFPEGPERWEKLSRANSRDGEAGRAAVASVTPEKQATELALLQRQHSLLQEELRRCQRLGEERATEAGSLEARLRESEQARALLEREAEEIRRQLAALGQNEPLPAEAPWARRPLDPRRRSLPAGDALYLSFNPPQPSRGHDRLDLPVTVRSLHRPFDDREAQELGSPEDRLQDSSDPDTCSEEEVSSRLSPPHSPRDFTRMQDIPEETESRDGEPTASES.

Residues 1–32 (MSRIESLTRARIDRSKEQATKTREKEKMKEAK) are disordered. The Phorbol-ester/DAG-type zinc-finger motif lies at 39-86 (GHLFTTISVSGMTMCYACNKSITAKEALICPTCNVTIHNRCKDTLANC). A phosphoserine mark is found at S109, S122, S129, S133, and S137. Positions 131-161 (RQSLLGSRRGLSSLSLAKSVSTTNIAGHFND) are interaction with DYNLT1. The residue at position 143 (S143) is a Phosphoserine; by PAK4. A phosphoserine mark is found at S151, S163, S172, S174, and S177. The 198-residue stretch at 236-433 (KKQDVIYELI…KELLSNVDQD (198 aa)) folds into the DH domain. K354 is subject to N6-acetyllysine. In terms of domain architecture, PH spans 473–572 (KLIHDGCLLW…WIRVIQQSVR (100 aa)). Positions 591–615 (LRRIKTKLQQKNQALVELLQMNVEL) form a coiled coil. 2 positions are modified to phosphoserine: S646 and S649. T680 bears the Phosphothreonine; by MAPK1 or MAPK3 mark. 3 positions are modified to phosphoserine: S692, S710, and S781. Position 795 is a phosphothreonine (T795). A coiled-coil region spans residues 797-866 (EKQATELALL…RQLAALGQNE (70 aa)). S885 is subject to Phosphoserine. Disordered stretches follow at residues 890–909 (DALY…DRLD) and 918–985 (HRPF…ASES). Residue Y893 is modified to Phosphotyrosine. S895 carries the phosphoserine; by PAK4 modification. Positions 919–938 (RPFDDREAQELGSPEDRLQD) are enriched in basic and acidic residues. Phosphoserine is present on residues S931, S939, and S940. Positions 940–949 (SDPDTCSEEE) are enriched in acidic residues. T944 is modified (phosphothreonine). 5 positions are modified to phosphoserine: S946, S951, S952, S955, and S959.

In terms of assembly, found in a complex composed at least of ARHGEF2, NOD2 and RIPK2. Interacts with RIPK2; the interaction mediates tyrosine phosphorylation of RIPK2 by Src kinase CSK. Interacts with RIPK1 and RIPK3. Interacts with YWHAZ/14-3-3 zeta; when phosphorylated at Ser-885. Interacts with the kinases PAK4, AURKA and MAPK1. Interacts with RHOA and RAC1. Interacts with NOD1. Interacts (via the N- terminal zinc finger) with CAPN6 (via domain II). Interacts with DYNLT1. Phosphorylation of Ser-885 by PAK1 induces binding to protein YWHAZ, promoting its relocation to microtubules and the inhibition of its activity. Phosphorylated by AURKA and CDK1 during mitosis, which negatively regulates its activity. Phosphorylation by MAPK1 or MAPK3 increases nucleotide exchange activity. Phosphorylation by PAK4 releases GEF-H1 from the microtubules. Phosphorylated on serine, threonine and tyrosine residues in a RIPK2-dependent manner.

It is found in the cytoplasm. It localises to the cytoskeleton. The protein resides in the cell junction. Its subcellular location is the tight junction. The protein localises to the golgi apparatus. It is found in the spindle. It localises to the cytoplasmic vesicle. Activates Rho-GTPases by promoting the exchange of GDP for GTP. May be involved in epithelial barrier permeability, cell motility and polarization, dendritic spine morphology, antigen presentation, leukemic cell differentiation, cell cycle regulation, innate immune response, and cancer. Binds Rac-GTPases, but does not seem to promote nucleotide exchange activity toward Rac-GTPases. May stimulate instead the cortical activity of Rac. Inactive toward CDC42, TC10, or Ras-GTPases. Forms an intracellular sensing system along with NOD1 for the detection of microbial effectors during cell invasion by pathogens. Involved in innate immune signaling transduction pathway promoting cytokine IL6/interleukin-6 and TNF-alpha secretion in macrophage upon stimulation by bacterial peptidoglycans; acts as a signaling intermediate between NOD2 receptor and RIPK2 kinase. Contributes to the tyrosine phosphorylation of RIPK2 through Src tyrosine kinase leading to NF-kappaB activation by NOD2. Overexpression activates Rho-, but not Rac-GTPases, and increases paracellular permeability. Involved in neuronal progenitor cell division and differentiation. Involved in the migration of precerebellar neurons. The chain is Rho guanine nucleotide exchange factor 2 (Arhgef2) from Rattus norvegicus (Rat).